A 384-amino-acid chain; its full sequence is S-adenosylmethionine synthase (384 aa).

An ATP-binding site is contributed by H15. Residue D17 coordinates Mg(2+). E43 is a K(+) binding site. Residues E56 and Q99 each coordinate L-methionine. Positions 99–109 (QSPDINQGVDK) are flexible loop. ATP contacts are provided by residues 164 to 166 (DAK), 230 to 231 (RF), D239, 245 to 246 (RK), A262, and K266. Residue D239 participates in L-methionine binding. K270 lines the L-methionine pocket.

This sequence belongs to the AdoMet synthase family. In terms of assembly, homotetramer; dimer of dimers. Mg(2+) is required as a cofactor. It depends on K(+) as a cofactor.

Its subcellular location is the cytoplasm. It carries out the reaction L-methionine + ATP + H2O = S-adenosyl-L-methionine + phosphate + diphosphate. The protein operates within amino-acid biosynthesis; S-adenosyl-L-methionine biosynthesis; S-adenosyl-L-methionine from L-methionine: step 1/1. Its function is as follows. Catalyzes the formation of S-adenosylmethionine (AdoMet) from methionine and ATP. The overall synthetic reaction is composed of two sequential steps, AdoMet formation and the subsequent tripolyphosphate hydrolysis which occurs prior to release of AdoMet from the enzyme. The sequence is that of S-adenosylmethionine synthase from Vibrio parahaemolyticus serotype O3:K6 (strain RIMD 2210633).